The following is a 253-amino-acid chain: Mediator of RNA polymerase II transcription subunit 19 (253 aa).

Disordered regions lie at residues 18–49 and 157–253; these read EQYSPKSSPRAGGAGGRSPVVARQDSSGTLKT and GPLP…TQVF. Residues 21–40 are compositionally biased toward low complexity; it reads SPKSSPRAGGAGGRSPVVAR. Composition is skewed to basic residues over residues 165–183 and 220–233; these read HLKSVPTRKHKNKHKKHKY and RKKRKKEKKRKKQR.

This sequence belongs to the Mediator complex subunit 19 family. As to quaternary structure, component of the Mediator complex.

Its subcellular location is the nucleus. Its function is as follows. Component of the Mediator complex, a coactivator involved in the regulated transcription of nearly all RNA polymerase II-dependent genes. Mediator functions as a bridge to convey information from gene-specific regulatory proteins to the basal RNA polymerase II transcription machinery. Mediator is recruited to promoters by direct interactions with regulatory proteins and serves as a scaffold for the assembly of a functional preinitiation complex with RNA polymerase II and the general transcription factors. The chain is Mediator of RNA polymerase II transcription subunit 19 (MED19) from Aedes aegypti (Yellowfever mosquito).